The primary structure comprises 48 residues: Large ribosomal subunit protein bL32c (48 aa).

The protein belongs to the bacterial ribosomal protein bL32 family.

Its subcellular location is the plastid. It is found in the chloroplast. The chain is Large ribosomal subunit protein bL32c (rpl32) from Vicia faba (Broad bean).